Here is an 88-residue protein sequence, read N- to C-terminus: MRLLISLPVLIVVLAMALEGPAPAQATPDLSSAFENLPEKLKEFGNTLEDKARAAIEHIKQKEILTKTRTWFSETFGKLKEKLKTTFD.

A signal peptide spans 1-26 (MRLLISLPVLIVVLAMALEGPAPAQA).

It belongs to the apolipoprotein C1 family.

Its subcellular location is the secreted. Functionally, inhibitor of lipoprotein binding to the low density lipoprotein (LDL) receptor, LDL receptor-related protein, and very low density lipoprotein (VLDL) receptor. Associates with high density lipoproteins (HDL) and the triacylglycerol-rich lipoproteins in the plasma and makes up about 10% of the protein of the VLDL and 2% of that of HDL. Appears to interfere directly with fatty acid uptake and is also the major plasma inhibitor of cholesteryl ester transfer protein (CETP). Modulates the interaction of APOE with beta-migrating VLDL and inhibits binding of beta-VLDL to the LDL receptor-related protein. Binds free fatty acids and reduces their intracellular esterification. The sequence is that of Apolipoprotein C-I (APOC1) from Mesocricetus auratus (Golden hamster).